The following is a 533-amino-acid chain: GMP synthase [glutamine-hydrolyzing] (533 aa).

A Glutamine amidotransferase type-1 domain is found at 22–215; that stretch reads RILILDFGSQ…THNVAGCSGT (194 aa). The active-site Nucleophile is the cysteine 99. Catalysis depends on residues histidine 189 and glutamate 191. In terms of domain architecture, GMPS ATP-PPase spans 216 to 408; the sequence is WTMAGFRELE…LGIPESIVGR (193 aa). 243-249 is a binding site for ATP; that stretch reads SGGVDSS.

In terms of assembly, homodimer.

The catalysed reaction is XMP + L-glutamine + ATP + H2O = GMP + L-glutamate + AMP + diphosphate + 2 H(+). It functions in the pathway purine metabolism; GMP biosynthesis; GMP from XMP (L-Gln route): step 1/1. Its function is as follows. Catalyzes the synthesis of GMP from XMP. This Gluconobacter oxydans (strain 621H) (Gluconobacter suboxydans) protein is GMP synthase [glutamine-hydrolyzing].